A 260-amino-acid polypeptide reads, in one-letter code: 4-hydroxy-tetrahydrodipicolinate reductase (260 aa).

NAD(+)-binding positions include 12-17, 92-94, and 118-121; these read GFRGKM, GTT, and APNF. The active-site Proton donor/acceptor is the histidine 148. Residue histidine 149 participates in (S)-2,3,4,5-tetrahydrodipicolinate binding. Catalysis depends on lysine 152, which acts as the Proton donor. 158 to 159 contacts (S)-2,3,4,5-tetrahydrodipicolinate; the sequence is GT.

This sequence belongs to the DapB family.

It localises to the cytoplasm. The enzyme catalyses (S)-2,3,4,5-tetrahydrodipicolinate + NAD(+) + H2O = (2S,4S)-4-hydroxy-2,3,4,5-tetrahydrodipicolinate + NADH + H(+). It catalyses the reaction (S)-2,3,4,5-tetrahydrodipicolinate + NADP(+) + H2O = (2S,4S)-4-hydroxy-2,3,4,5-tetrahydrodipicolinate + NADPH + H(+). It participates in amino-acid biosynthesis; L-lysine biosynthesis via DAP pathway; (S)-tetrahydrodipicolinate from L-aspartate: step 4/4. Functionally, catalyzes the conversion of 4-hydroxy-tetrahydrodipicolinate (HTPA) to tetrahydrodipicolinate. This Lactococcus lactis subsp. cremoris (strain SK11) protein is 4-hydroxy-tetrahydrodipicolinate reductase.